The following is a 234-amino-acid chain: Thrombin-like enzyme ancrod (234 aa).

Residues 1–227 (VIGGDECNIN…YRDWVNNVIA (227 aa)) enclose the Peptidase S1 domain. 6 disulfide bridges follow: Cys7–Cys141, Cys28–Cys44, Cys78–Cys232, Cys120–Cys188, Cys152–Cys167, and Cys178–Cys203. Asn23 is a glycosylation site (N-linked (GlcNAc...) asparagine). Residue His43 is the Charge relay system of the active site. Asn79 is a glycosylation site (N-linked (GlcNAc...) asparagine). Asp88 serves as the catalytic Charge relay system. N-linked (GlcNAc...) asparagine glycans are attached at residues Asn99 and Asn148. The Charge relay system role is filled by Ser182. The N-linked (GlcNAc...) asparagine glycan is linked to Asn229.

The protein belongs to the peptidase S1 family. Snake venom subfamily. As to quaternary structure, monomer. In terms of tissue distribution, expressed by the venom gland.

It is found in the secreted. The enzyme catalyses Selective cleavage of Arg-|-Xaa bond in fibrinogen, to form fibrin, and release fibrinopeptide A. The specificity of further degradation of fibrinogen varies with species origin of the enzyme.. Its function is as follows. Thrombin-like snake venom serine protease that acts as an anticoagulant. It cleaves fibrinogen (FGA) to split off the A-fibrinopeptides (A, AY and AP), but not the B-fibrinopeptide. The resulting fibrin polymers are imperfectly formed and much smaller in size (1 to 2 um long) than the fibrin polymers produced by the action of thrombin. These ancrod-induced microthrombi are friable, unstable, urea-soluble and have significantly degraded alpha chains. They do not cross-link to form thrombi. They are markedly susceptible to digestion by plasmin and are rapidly removed from circulation by either reticuloendothelial phagocytosis or normal fibrinolysis, or both. Anticoagulation through the removal of fibrinogen from the blood is rapid, occurring within hours following its administration. It does not activate plasminogen and does not degrade preformed, fully cross-linked thrombin fibrin. It also reduces the level of plasminogen activator inhibitor (PAI) and may stimulate the release of tissue plasminogen activator (PLAT) from the endothelium. The profibrinolytic effect of these 2 actions appears to be limited to local microthrombus degradation. This is Thrombin-like enzyme ancrod from Calloselasma rhodostoma (Malayan pit viper).